Here is a 240-residue protein sequence, read N- to C-terminus: Allene oxide cyclase, chloroplastic (240 aa).

Residues 1–49 (MAAAAPSRVSVRAAAPGQTGGFAKIRPQVVVAAAARSAGVSGRRARSVR) constitute a chloroplast transit peptide.

This sequence belongs to the allene oxide cyclase family.

It localises to the plastid. Its subcellular location is the chloroplast. The enzyme catalyses (9Z,13S,15Z)-12,13-epoxyoctadeca-9,11,15-trienoate = (9S,13S,15Z)-12-oxophyto-10,15-dienoate. It participates in lipid metabolism; polyunsaturated fatty acid biosynthesis. Its function is as follows. Involved in the production of 12-oxo-phytodienoic acid (OPDA), a precursor of jasmonic acid (JA). Required for the production of JA in response to wounding. Necessary for flower and coleoptile development regulation by light, including blue (BL), red (RL) and far red (FR) lights. Involved in the auxin-mediated signaling pathway leading to growth stimulation. Essential for photodestruction of phyA upon activation by RL and FR. Implicated in responses to salt stress (NaCl). Confers resistance to incompatible strains of the blast fungus Magnaporthe grisea, jasmonic acid (JA) thus playing a significant role in the resistance to fungal infection. Implicated in riboflavin-induced resistance to the sheath blight Rhizoctonia solani. Required for Pseudomonas fluorescens-mediated JA-dependent induced systemic resistance (ISR). Confers some resistance, independently of the JA pathway but probably via OPDA accumulation, to brown planthopper (BPH, Nilaparvata lugens), a destructive, monophagous, piercing-sucking insect, mainly by reducing its feeding activity and survival rate. Triggers resistance to the chewing insect striped stem borer (SSB) Chilo suppressalis, to the root hemiparasite witchweed Striga hermonthica, and to the root feeder insect rice water weevil Lissorhoptrus oryzophilus, in a JA-dependent manner, by attenuating both the growth mass and growth rate of caterpillars. The chain is Allene oxide cyclase, chloroplastic from Oryza sativa subsp. indica (Rice).